The following is a 201-amino-acid chain: Superoxide dismutase [Mn/Fe] (201 aa).

The Fe(3+) site is built by His-27, His-81, Asp-162, and His-166. 4 residues coordinate Mn(2+): His-27, His-81, Asp-162, and His-166.

The protein belongs to the iron/manganese superoxide dismutase family. Homodimer. Mn(2+) serves as cofactor. It depends on Fe(3+) as a cofactor.

It catalyses the reaction 2 superoxide + 2 H(+) = H2O2 + O2. Destroys superoxide anion radicals which are normally produced within the cells and which are toxic to biological systems. Catalyzes the dismutation of superoxide anion radicals into O2 and H2O2 by successive reduction and oxidation of the transition metal ion at the active site. In Staphylococcus carnosus, this protein is Superoxide dismutase [Mn/Fe] (sodA).